The sequence spans 61 residues: Large ribosomal subunit protein uL30 (61 aa).

It belongs to the universal ribosomal protein uL30 family. As to quaternary structure, part of the 50S ribosomal subunit.

The sequence is that of Large ribosomal subunit protein uL30 from Methylococcus capsulatus (strain ATCC 33009 / NCIMB 11132 / Bath).